We begin with the raw amino-acid sequence, 206 residues long: Ras-related protein Ral-B (206 aa).

Position 21–29 (21–29) interacts with GTP; that stretch reads GSGGVGKSA. The Effector region motif lies at 43–51; the sequence is YEPTKADSY. GTP is bound by residues 68–72, 128–131, and 158–160; these read DTAGQ, NKSD, and SAK. Residues 180–189 show a composition bias toward basic and acidic residues; that stretch reads KMSENKDKNG. The segment at 180-206 is disordered; the sequence is KMSENKDKNGKKSGKNKKSFKERCCLL. A Cysteine methyl ester modification is found at Cys-203. Residue Cys-203 is the site of S-geranylgeranyl cysteine attachment. Positions 204-206 are cleaved as a propeptide — removed in mature form; the sequence is CLL.

The protein belongs to the small GTPase superfamily. Ras family. In terms of assembly, interacts with EXOC2/Sec5 and EXOC8/Exo84. Interacts (via effector domain) with RALBP1. Prenylation is essential for membrane localization. Post-translationally, the farnesylated form confers resistance to the proapoptotic and anti-anchorage-dependent growth effects of some geranylgeranyltransferase I inhibitors.

Its subcellular location is the cell membrane. It localises to the midbody. It catalyses the reaction GTP + H2O = GDP + phosphate + H(+). Alternates between an inactive form bound to GDP and an active form bound to GTP. Activated by a guanine nucleotide-exchange factor (GEF) and inactivated by a GTPase-activating protein (GAP). In terms of biological role, multifunctional GTPase involved in a variety of cellular processes including gene expression, cell migration, cell proliferation, oncogenic transformation and membrane trafficking. Accomplishes its multiple functions by interacting with distinct downstream effectors. Acts as a GTP sensor for GTP-dependent exocytosis of dense core vesicles. Required both to stabilize the assembly of the exocyst complex and to localize functional exocyst complexes to the leading edge of migrating cells. Required for suppression of apoptosis. In late stages of cytokinesis, upon completion of the bridge formation between dividing cells, mediates exocyst recruitment to the midbody to drive abscission. Involved in ligand-dependent receptor mediated endocytosis of the EGF and insulin receptors. This chain is Ras-related protein Ral-B (RALB), found in Macaca fascicularis (Crab-eating macaque).